A 250-amino-acid polypeptide reads, in one-letter code: Putative apoptosis inhibitor ORF99 (250 aa).

Residues 13-78 (RVNSFGGWSK…KFSGDCLYLK (66 aa)) form a BIR repeat.

May act as an apoptosis inhibitor. The protein is Putative apoptosis inhibitor ORF99 of Ostreid herpesvirus 1 (isolate France) (OsHV-1).